The primary structure comprises 142 residues: Ribonuclease VapC25 (142 aa).

In terms of domain architecture, PINc spans 3-139 (LIDVNVLLAA…ARFASVRHIR (137 aa)). Residues Asp5 and Asp108 each coordinate Mg(2+).

This sequence belongs to the PINc/VapC protein family. Mg(2+) is required as a cofactor.

Functionally, toxic component of a type II toxin-antitoxin (TA) system. An RNase. Upon expression in M.smegmatis inhibits colony formation. Its toxic effect is neutralized by coexpression with cognate antitoxin VapB25. This chain is Ribonuclease VapC25, found in Mycobacterium tuberculosis (strain ATCC 25618 / H37Rv).